A 380-amino-acid chain; its full sequence is Gibberellin 20 oxidase 3 (380 aa).

The Fe2OG dioxygenase domain maps to 221 to 321 (DSDSIFRLNY…RKTFAFFLCP (101 aa)). 3 residues coordinate Fe cation: histidine 246, aspartate 248, and histidine 302. Arginine 312 is a catalytic residue.

This sequence belongs to the iron/ascorbate-dependent oxidoreductase family. GA20OX subfamily. The cofactor is Fe(2+). Requires L-ascorbate as cofactor. In terms of tissue distribution, expressed at high level in developing siliques. Detected in seeds, roots, leaves and inflorescences. In seeds, specifically detected at the outer layer of the outer integument.

The catalysed reaction is gibberellin A12 + 2 2-oxoglutarate + 3 O2 + H(+) = gibberellin A9 + 2 succinate + 3 CO2 + 2 H2O. It catalyses the reaction gibberellin A12 + 3 2-oxoglutarate + 3 O2 = gibberellin A25 + 3 succinate + 3 CO2 + H2O + H(+). It carries out the reaction gibberellin A53 + 2 2-oxoglutarate + 3 O2 + H(+) = gibberellin A20 + 2 succinate + 3 CO2 + 2 H2O. Its pathway is plant hormone biosynthesis; gibberellin biosynthesis. In terms of biological role, key oxidase enzyme in the biosynthesis of gibberellin that catalyzes the conversion of GA12 and GA53 to GA9 and GA20 respectively, via a three-step oxidation at C-20 of the GA skeleton, and GA25 is also formed as a minor product. GA53 is less effectively oxidized than GA12. The sequence is that of Gibberellin 20 oxidase 3 (GA20OX3) from Arabidopsis thaliana (Mouse-ear cress).